We begin with the raw amino-acid sequence, 404 residues long: AT-hook motif nuclear-localized protein 3 (404 aa).

3 disordered regions span residues 1 to 51 (MEER…VPPT), 70 to 100 (PFSLTMPTENTSAEQLKKKRGRPRKYNPDGT), and 113 to 133 (SVPLTSEFPPRKRGRGRGKSN). Residues 7–19 (TNINNNITSSFGL) show a composition bias toward polar residues. Residues 35 to 51 (DPPPRPENPNPFLVPPT) show a composition bias toward pro residues. The span at 71–83 (FSLTMPTENTSAE) shows a compositional bias: polar residues. The Bipartite nuclear localization signal signature appears at 86-94 (KKKRGRPRK). A DNA-binding region (a.T hook) is located at residues 86–98 (KKKRGRPRKYNPD). Over residues 123-133 (RKRGRGRGKSN) the composition is skewed to basic residues. The 146-residue stretch at 163–308 (GANFTPHVLI…RFGAQPSSIS (146 aa)) folds into the PPC domain. Residues 359-404 (PFSSIPVGGGGGGEVGEEEGEEDDDELEGEDEEFGGDSQSDNEIPS) form a disordered region. Positions 373–393 (VGEEEGEEDDDELEGEDEEFG) are enriched in acidic residues.

As to quaternary structure, homodimer. Interacts with AHL4. In terms of tissue distribution, expressed in both procambium and xylem precursors of the root meristem. Also detected in the endodermis in the late elongation zone and onwards.

It is found in the nucleus. In terms of biological role, transcription factor that specifically binds AT-rich DNA sequences related to the nuclear matrix attachment regions (MARs). Acts redundantly with AHL4 to regulate the formation of tissue boundary between the xylem and procambium in the root meristem. This is AT-hook motif nuclear-localized protein 3 from Arabidopsis thaliana (Mouse-ear cress).